A 263-amino-acid polypeptide reads, in one-letter code: 4-hydroxy-tetrahydrodipicolinate reductase (263 aa).

Residues 8 to 13 (GASGRM), D34, 99 to 101 (GTT), and 125 to 128 (SPNY) each bind NAD(+). Residue H157 is the Proton donor/acceptor of the active site. (S)-2,3,4,5-tetrahydrodipicolinate is bound at residue H158. The active-site Proton donor is the K161. 167–168 (GT) contributes to the (S)-2,3,4,5-tetrahydrodipicolinate binding site.

It belongs to the DapB family.

The protein resides in the cytoplasm. It carries out the reaction (S)-2,3,4,5-tetrahydrodipicolinate + NAD(+) + H2O = (2S,4S)-4-hydroxy-2,3,4,5-tetrahydrodipicolinate + NADH + H(+). The catalysed reaction is (S)-2,3,4,5-tetrahydrodipicolinate + NADP(+) + H2O = (2S,4S)-4-hydroxy-2,3,4,5-tetrahydrodipicolinate + NADPH + H(+). Its pathway is amino-acid biosynthesis; L-lysine biosynthesis via DAP pathway; (S)-tetrahydrodipicolinate from L-aspartate: step 4/4. Catalyzes the conversion of 4-hydroxy-tetrahydrodipicolinate (HTPA) to tetrahydrodipicolinate. The chain is 4-hydroxy-tetrahydrodipicolinate reductase from Methanococcoides burtonii (strain DSM 6242 / NBRC 107633 / OCM 468 / ACE-M).